The chain runs to 322 residues: HPr kinase/phosphorylase (322 aa).

Residues H146 and K167 contribute to the active site. G161–S168 is a binding site for ATP. Position 168 (S168) interacts with Mg(2+). The Proton acceptor; for phosphorylation activity. Proton donor; for dephosphorylation activity role is filled by D185. Residues L209–D218 are important for the catalytic mechanism of both phosphorylation and dephosphorylation. E210 serves as a coordination point for Mg(2+). R250 is a catalytic residue. An important for the catalytic mechanism of dephosphorylation region spans residues Q271–R276.

This sequence belongs to the HPrK/P family. Homohexamer. The cofactor is Mg(2+).

The enzyme catalyses [HPr protein]-L-serine + ATP = [HPr protein]-O-phospho-L-serine + ADP + H(+). It carries out the reaction [HPr protein]-O-phospho-L-serine + phosphate + H(+) = [HPr protein]-L-serine + diphosphate. In terms of biological role, catalyzes the ATP- as well as the pyrophosphate-dependent phosphorylation of a specific serine residue in HPr, a phosphocarrier protein of the phosphoenolpyruvate-dependent sugar phosphotransferase system (PTS). HprK/P also catalyzes the pyrophosphate-producing, inorganic phosphate-dependent dephosphorylation (phosphorolysis) of seryl-phosphorylated HPr (P-Ser-HPr). The sequence is that of HPr kinase/phosphorylase from Burkholderia mallei (strain NCTC 10247).